The chain runs to 309 residues: Transcription initiation factor IIB 1 (309 aa).

2 tandem repeats follow at residues N125–L208 and D219–Q300.

This sequence belongs to the TFIIB family.

In terms of biological role, stabilizes TBP binding to an archaeal box-A promoter. Also responsible for recruiting RNA polymerase II to the pre-initiation complex (DNA-TBP-TFIIB). This is Transcription initiation factor IIB 1 from Saccharolobus solfataricus (strain ATCC 35092 / DSM 1617 / JCM 11322 / P2) (Sulfolobus solfataricus).